Reading from the N-terminus, the 272-residue chain is tRNA pseudouridine synthase A (272 aa).

Asp-51 acts as the Nucleophile in catalysis. Tyr-109 lines the substrate pocket.

The protein belongs to the tRNA pseudouridine synthase TruA family. Homodimer.

The catalysed reaction is uridine(38/39/40) in tRNA = pseudouridine(38/39/40) in tRNA. Functionally, formation of pseudouridine at positions 38, 39 and 40 in the anticodon stem and loop of transfer RNAs. This Verminephrobacter eiseniae (strain EF01-2) protein is tRNA pseudouridine synthase A.